The following is a 28-amino-acid chain: Ranatuerin-2SEc (28 aa).

Cys23 and Cys28 are disulfide-bonded.

In terms of tissue distribution, expressed by the skin glands.

Its subcellular location is the secreted. Mast cell degranulating peptide. Causes histamine release from rat peritoneal mast cells in vitro. Has antibacterial activity against the Gram-negative bacterium E.coli K12 and Gram-positive bacterium M.luteus NCT C2665. The chain is Ranatuerin-2SEc from Lithobates sevosus (Dusky gopher frog).